Here is an 850-residue protein sequence, read N- to C-terminus: AdoMet-dependent rRNA methyltransferase SPB1 (850 aa).

Residues glycine 58, tryptophan 60, aspartate 78, aspartate 94, and aspartate 119 each contribute to the S-adenosyl-L-methionine site. Residue lysine 159 is the Proton acceptor of the active site. A compositionally biased stretch (polar residues) spans 273 to 282 (GETNEMTWTP). Disordered stretches follow at residues 273–305 (GETN…ARDE), 388–414 (IDKE…NEMK), 529–569 (GISD…RTLN), and 620–646 (AKKN…KQDD). Basic and acidic residues predominate over residues 388–400 (IDKELSELGEREK). A coiled-coil region spans residues 397-425 (EREKARKKRERRRRNEMKQREIQRMQMNM). Residues 401–411 (ARKKRERRRRN) are compositionally biased toward basic residues. Acidic residues-rich tracts occupy residues 537–561 (DESD…DEDD) and 628–638 (SDSEDEEDDIV). Positions 746–773 (LEAKGRKKMRALRRLEQMKKKSELINED) form a coiled coil. Positions 811–850 (KNKGIAGRPRGVTGKYKMVDGTMKKEQRAIRRIKKKMGKK) are disordered. Residues 840–850 (IRRIKKKMGKK) are compositionally biased toward basic residues.

It belongs to the class I-like SAM-binding methyltransferase superfamily. RNA methyltransferase RlmE family. SPB1 subfamily. As to quaternary structure, component of the nucleolar and nucleoplasmic pre-60S ribosomal particle.

Its subcellular location is the nucleus. The protein resides in the nucleolus. The catalysed reaction is a ribonucleotide in rRNA + S-adenosyl-L-methionine = a 2'-O-methylribonucleotide in rRNA + S-adenosyl-L-homocysteine + H(+). In terms of biological role, required for proper assembly of pre-ribosomal particles during the biogenesis of the 60S ribosomal subunit. This is AdoMet-dependent rRNA methyltransferase SPB1 from Yarrowia lipolytica (strain CLIB 122 / E 150) (Yeast).